Reading from the N-terminus, the 1035-residue chain is Ephrin type-A receptor 6 (1035 aa).

Residues 1 to 22 form the signal peptide; sequence MGGCEVREFLLQFGFFLPLLTA. Residues 23-549 lie on the Extracellular side of the membrane; the sequence is WTGDCSHVSN…MAAEQGQILV (527 aa). An Eph LBD domain is found at 33–211; sequence QVVLLDTTTV…FYKKCPFTVR (179 aa). Fibronectin type-III domains follow at residues 330–440 and 441–536; these read PPSA…TDHD and APSL…TGDE. Residues asparagine 342, asparagine 396, and asparagine 409 are each glycosylated (N-linked (GlcNAc...) asparagine). The helical transmembrane segment at 550–570 threads the bilayer; it reads IATAAVGGFTLLVILTLFFLI. The Cytoplasmic segment spans residues 571–1035; that stretch reads TGRCQWYIKA…MHIQEKGFHV (465 aa). Phosphotyrosine; by autocatalysis occurs at positions 605 and 611. The region spanning 630–943 is the Protein kinase domain; the sequence is IRIERVIGAG…RNPSALHTLV (314 aa). Residues 636–644 and lysine 662 each bind ATP; that span reads IGAGEFGEV. The active-site Proton acceptor is the aspartate 797. Residues tyrosine 830 and tyrosine 977 each carry the phosphotyrosine; by autocatalysis modification. Residues 960 to 1024 enclose the SAM domain; the sequence is PLFVTVGDWL…VSSIQTLRLH (65 aa). Residues 1033–1035 carry the PDZ-binding motif; that stretch reads FHV.

Belongs to the protein kinase superfamily. Tyr protein kinase family. Ephrin receptor subfamily. As to quaternary structure, heterotetramer upon binding of the ligand. The heterotetramer is composed of an ephrin dimer and a receptor dimer. Oligomerization is probably required to induce biological responses. Interacts (via SAM domain) with ANKS1A (via SAM domain).

The protein resides in the membrane. The enzyme catalyses L-tyrosyl-[protein] + ATP = O-phospho-L-tyrosyl-[protein] + ADP + H(+). Its function is as follows. Receptor tyrosine kinase which binds promiscuously GPI-anchored ephrin-A family ligands residing on adjacent cells, leading to contact-dependent bidirectional signaling into neighboring cells. The signaling pathway downstream of the receptor is referred to as forward signaling while the signaling pathway downstream of the ephrin ligand is referred to as reverse signaling. In Mus musculus (Mouse), this protein is Ephrin type-A receptor 6 (Epha6).